The primary structure comprises 149 residues: Transcriptional repressor NrdR (149 aa).

Residues 3–34 (CPFCFAVDTKVIDSRLVGEGSSVRRRRQCLVC) fold into a zinc finger. Positions 49 to 139 (PRVVKSNDVR…VYRSFEDIKE (91 aa)) constitute an ATP-cone domain.

The protein belongs to the NrdR family. Requires Zn(2+) as cofactor.

Its function is as follows. Negatively regulates transcription of bacterial ribonucleotide reductase nrd genes and operons by binding to NrdR-boxes. This Escherichia coli O139:H28 (strain E24377A / ETEC) protein is Transcriptional repressor NrdR.